Here is a 365-residue protein sequence, read N- to C-terminus: Keratin-associated protein 10-6 (365 aa).

A run of 29 repeats spans residues C41–P45, C46–A50, C67–T71, C89–S93, C99–S103, C109–V113, C114–V118, C119–V123, C124–V128, C129–S133, C135–S139, C145–S149, C155–V159, C160–V164, C172–S176, C186–V190, C208–S212, C218–S222, C228–V232, C233–V237, C238–T242, C250–S254, C260–S264, C270–V274, C282–S286, C292–S296, C297–S301, C316–V320, and C334–A338. The segment at C41–A338 is 29 X 5 AA repeats of C-C-X(3).

It belongs to the KRTAP type 10 family. Interacts with hair keratins. In terms of tissue distribution, restricted to a narrow region of the hair fiber cuticle, lying approximately 20 cell layers above the apex of the dermal papilla of the hair root; not detected in any other tissues.

In terms of biological role, in the hair cortex, hair keratin intermediate filaments are embedded in an interfilamentous matrix, consisting of hair keratin-associated proteins (KRTAP), which are essential for the formation of a rigid and resistant hair shaft through their extensive disulfide bond cross-linking with abundant cysteine residues of hair keratins. The matrix proteins include the high-sulfur and high-glycine-tyrosine keratins. This Homo sapiens (Human) protein is Keratin-associated protein 10-6 (KRTAP10-6).